The sequence spans 711 residues: Amino-acid racemase (711 aa).

The Cytoplasmic segment spans residues 1–14 (MTKNESYSGIDYFR). A helical transmembrane segment spans residues 15–35 (FIAALLIVAIHTSPLFSFSET). At 36–37 (GN) the chain is on the extracellular side. A helical transmembrane segment spans residues 38–58 (FIFTRIVAPVAVPFFFMTSGF). Residues 59-78 (FLISRYTCNAEKLGAFIKKT) lie on the Cytoplasmic side of the membrane. The chain crosses the membrane as a helical span at residues 79 to 99 (TLIYGVAILLYIPINVYNGYF). Residues 100–117 (KMDNLLPNIIKDIVFDGT) lie on the Extracellular side of the membrane. A helical membrane pass occupies residues 118-138 (LYHLWYLPASIIGAAIAWYLV). The Cytoplasmic segment spans residues 139–146 (KKVHYRKA). A helical membrane pass occupies residues 147-167 (FLIASILYIIGLFGDSYYGIV). Topologically, residues 168–188 (KSVSCLNVFYNLIFQLTDYTR) are extracellular. A helical transmembrane segment spans residues 189-209 (NGIFFAPIFFVLGGYISDSPN). Residues 210–241 (RYRKKNYIRIYSLFCLMFGKTLTLQHFDIQKH) lie on the Cytoplasmic side of the membrane. Residues 242–262 (DSMYVLLLPSVWCLFNLLLHF) form a helical membrane-spanning segment. The Extracellular segment spans residues 263–306 (RGKRRTGLRTISLDQLYHSSVYDCCNTIVCAELLHLQSLLVENS). A helical transmembrane segment spans residues 307–327 (LVHYIAVCFASVVLAVVITAL). The Cytoplasmic portion of the chain corresponds to 328 to 711 (LSSLKPKKAK…EHRLNIIRRA (384 aa)). Positions 336–711 (AKHTADTDRA…EHRLNIIRRA (376 aa)) are racemase. The active-site Proton acceptor is Lys-376. Lys-376 is modified (N6-(pyridoxal phosphate)lysine). Arg-470 is a binding site for substrate. Residue Tyr-602 is the Proton acceptor of the active site. Met-651 is a binding site for substrate.

It in the N-terminal section; belongs to the acyltransferase 3 family. The protein in the C-terminal section; belongs to the alanine racemase family. Pyridoxal 5'-phosphate is required as a cofactor.

It localises to the cell membrane. The protein is Amino-acid racemase (vanTG) of Enterococcus faecalis (Streptococcus faecalis).